The primary structure comprises 149 residues: Large ribosomal subunit protein uL24 (149 aa).

The tract at residues 114–149 (RKIIERSGGTPEVEAVPEKSEEEKEEKEKEEEKSEE) is disordered. Over residues 129 to 149 (VPEKSEEEKEEKEKEEEKSEE) the composition is skewed to basic and acidic residues.

This sequence belongs to the universal ribosomal protein uL24 family. In terms of assembly, part of the 50S ribosomal subunit.

Its function is as follows. One of two assembly initiator proteins, it binds directly to the 5'-end of the 23S rRNA, where it nucleates assembly of the 50S subunit. In terms of biological role, located at the polypeptide exit tunnel on the outside of the subunit. This is Large ribosomal subunit protein uL24 from Methanopyrus kandleri (strain AV19 / DSM 6324 / JCM 9639 / NBRC 100938).